A 427-amino-acid chain; its full sequence is Peptidase B (427 aa).

2 residues coordinate Mn(2+): K195 and D200. K207 is a catalytic residue. 3 residues coordinate Mn(2+): D218, D277, and E279. R281 is an active-site residue.

The protein belongs to the peptidase M17 family. As to quaternary structure, homohexamer. Requires Mn(2+) as cofactor.

It is found in the cytoplasm. It carries out the reaction Release of an N-terminal amino acid, Xaa, from a peptide or arylamide. Xaa is preferably Glu or Asp but may be other amino acids, including Leu, Met, His, Cys and Gln.. Functionally, probably plays an important role in intracellular peptide degradation. In Citrobacter koseri (strain ATCC BAA-895 / CDC 4225-83 / SGSC4696), this protein is Peptidase B.